Reading from the N-terminus, the 438-residue chain is MGFHIYEIKARQIIDSRGNPTVEADVILEDGTCGRSAVPSGASTGINEAVELRDGDKSVYMGKGVLKAIENIKNIIAPELEGMSALNQVAIDRKMLELDGTPTKEKLGANAILAVSMATAKAAAKYLGLKVYQYLGAYKANILPTPMCNIINGGAHSDNSVDFQEFMIMPVGAKTFSEAIRMAVEVFHTLKGILNGKGYATSVGDEGGFAPNLKSNEEACEMIIEAIKKAGYEPGKDIAIALDPATSELYDPKTKKYVLKWSTKEELTSEQMVEYWSKWVEKYPIISIEDGMAEEDWDGWKKLTDKIGHKIQLVGDDLFVTNTSFLKKGIEMGVANSILIKVNQIGTLTETFEAVEMAKKAGYTAIVSHRSGETEDTTIADLVVALGTGQIKTGSLSRTDRIAKYNQLIRIEEELETTAEYHGKNVFYSIKQKQIKSL.

Position 164 (Q164) interacts with (2R)-2-phosphoglycerate. Residue E206 is the Proton donor of the active site. The Mg(2+) site is built by D243, E289, and D316. Residues K341, R370, S371, and K392 each contribute to the (2R)-2-phosphoglycerate site. The active-site Proton acceptor is K341.

It belongs to the enolase family. Requires Mg(2+) as cofactor.

It localises to the cytoplasm. The protein localises to the secreted. It is found in the cell surface. The enzyme catalyses (2R)-2-phosphoglycerate = phosphoenolpyruvate + H2O. The protein operates within carbohydrate degradation; glycolysis; pyruvate from D-glyceraldehyde 3-phosphate: step 4/5. Catalyzes the reversible conversion of 2-phosphoglycerate (2-PG) into phosphoenolpyruvate (PEP). It is essential for the degradation of carbohydrates via glycolysis. The polypeptide is Enolase (Borrelia garinii subsp. bavariensis (strain ATCC BAA-2496 / DSM 23469 / PBi) (Borreliella bavariensis)).